A 567-amino-acid chain; its full sequence is Multidrug transporter TPO1_1 (567 aa).

A disordered region spans residues Met-1–Gly-71. A glycan (N-linked (GlcNAc...) asparagine) is linked at Asn-120. 12 helical membrane passes run Ile-128–Ala-148, Ile-157–Ala-177, Gly-194–Lys-214, Phe-224–Met-244, Ala-253–Ser-273, Trp-283–Phe-303, Pro-358–Leu-378, Glu-396–Phe-416, Leu-436–Thr-456, Ala-471–Ile-491, Ala-498–Ala-520, and Trp-531–Leu-551.

It belongs to the major facilitator superfamily. DHA1 family. Polyamines/proton antiporter (TC 2.A.1.2.16) subfamily.

The protein localises to the cell membrane. Multidrug resistance transporter involved in resistance to azole antifungal drugs such as the imidazoles miconazole, ketoconazole, and tioconazole; as well as the triazoles itraconazole and fluconazole. Also plays a role in the resistance to other antifungal drug families such as the polyene amphotericin B, the pyrimide analog flucytosine, the fungicide mancozeb, and the polyamine spermine. Decreases the intracellular accumulation of clotrimazole by mediating its extrusion from cells. Involved in virulence by conferring resistance to the human antimicrobial peptide histatin-5. In Candida glabrata (strain ATCC 2001 / BCRC 20586 / JCM 3761 / NBRC 0622 / NRRL Y-65 / CBS 138) (Yeast), this protein is Multidrug transporter TPO1_1.